Consider the following 666-residue polypeptide: DNA mismatch repair protein MutL (666 aa).

The protein belongs to the DNA mismatch repair MutL/HexB family.

This protein is involved in the repair of mismatches in DNA. It is required for dam-dependent methyl-directed DNA mismatch repair. May act as a 'molecular matchmaker', a protein that promotes the formation of a stable complex between two or more DNA-binding proteins in an ATP-dependent manner without itself being part of a final effector complex. The polypeptide is DNA mismatch repair protein MutL (Clostridium botulinum (strain 657 / Type Ba4)).